Here is a 166-residue protein sequence, read N- to C-terminus: Disulfide bond formation protein B (166 aa).

Over 1-10 (MGLNITNRQG) the chain is Cytoplasmic. Residues 11 to 27 (FLLVAAACAGAIGFALF) form a helical membrane-spanning segment. Residues 28–45 (AQYQLGEEPCPLCILQRI) lie on the Periplasmic side of the membrane. Cys-37 and Cys-40 form a disulfide bridge. The helical transmembrane segment at 46-62 (GVMAVGALALLAALHNP) threads the bilayer. The Cytoplasmic segment spans residues 63–69 (GKTGAKV). The helical transmembrane segment at 70 to 86 (WGGLMTLAALSGAGVSL) threads the bilayer. Residues 87-143 (RQLWLQSLPADQVPQCGPGLEFLMESFPLWEVLSKVLKGSGECAAIQGRFLGMTMPF) are Periplasmic-facing. Residues Cys-102 and Cys-129 are joined by a disulfide bond. The helical transmembrane segment at 144 to 162 (WVAVFFAGVIVWTLWLVGR) threads the bilayer. At 163–166 (RRRG) the chain is on the cytoplasmic side.

This sequence belongs to the DsbB family.

The protein localises to the cell inner membrane. Required for disulfide bond formation in some periplasmic proteins. Acts by oxidizing the DsbA protein. The sequence is that of Disulfide bond formation protein B from Chromobacterium violaceum (strain ATCC 12472 / DSM 30191 / JCM 1249 / CCUG 213 / NBRC 12614 / NCIMB 9131 / NCTC 9757 / MK).